The sequence spans 142 residues: Hemoglobin subunit alpha-1 (142 aa).

The Globin domain occupies Val2–Arg142. O2 is bound at residue His59. Heme b is bound at residue His88.

Belongs to the globin family. In terms of assembly, heterotetramer of two alpha chains and two beta chains. Red blood cells.

Involved in oxygen transport from the lung to the various peripheral tissues. Functionally, hemopressin acts as an antagonist peptide of the cannabinoid receptor CNR1. Hemopressin-binding efficiently blocks cannabinoid receptor CNR1 and subsequent signaling. The sequence is that of Hemoglobin subunit alpha-1 (HBA1) from Hylobates lar (Lar gibbon).